Here is a 489-residue protein sequence, read N- to C-terminus: Betaine aldehyde dehydrogenase (489 aa).

Thr-26 and Asp-93 together coordinate K(+). 150-152 provides a ligand contact to NAD(+); that stretch reads GAW. Lys-162 functions as the Charge relay system in the catalytic mechanism. NAD(+) is bound at residue 176-179; it reads KPSE. K(+) is bound at residue Val-180. NAD(+) is bound at residue 229–232; that stretch reads GVET. A K(+)-binding site is contributed by Leu-245. Residue Glu-251 is the Proton acceptor of the active site. Residues Gly-253, Cys-285, and Glu-386 each coordinate NAD(+). The active-site Nucleophile is the Cys-285. Position 285 is a cysteine sulfenic acid (-SOH) (Cys-285). Positions 456 and 459 each coordinate K(+). Residue Glu-463 is the Charge relay system of the active site.

It belongs to the aldehyde dehydrogenase family. Dimer of dimers. The cofactor is K(+).

The enzyme catalyses betaine aldehyde + NAD(+) + H2O = glycine betaine + NADH + 2 H(+). It functions in the pathway amine and polyamine biosynthesis; betaine biosynthesis via choline pathway; betaine from betaine aldehyde: step 1/1. Its function is as follows. Involved in the biosynthesis of the osmoprotectant glycine betaine. Catalyzes the irreversible oxidation of betaine aldehyde to the corresponding acid. The protein is Betaine aldehyde dehydrogenase of Burkholderia pseudomallei (strain 668).